Here is a 290-residue protein sequence, read N- to C-terminus: Porphobilinogen deaminase (290 aa).

Cys237 bears the S-(dipyrrolylmethanemethyl)cysteine mark.

It belongs to the HMBS family. In terms of assembly, monomer. It depends on dipyrromethane as a cofactor.

The catalysed reaction is 4 porphobilinogen + H2O = hydroxymethylbilane + 4 NH4(+). Its pathway is porphyrin-containing compound metabolism; protoporphyrin-IX biosynthesis; coproporphyrinogen-III from 5-aminolevulinate: step 2/4. In terms of biological role, tetrapolymerization of the monopyrrole PBG into the hydroxymethylbilane pre-uroporphyrinogen in several discrete steps. This Clostridium botulinum (strain Loch Maree / Type A3) protein is Porphobilinogen deaminase.